We begin with the raw amino-acid sequence, 171 residues long: AN1-type zinc finger protein 2A (171 aa).

2 AN1-type zinc fingers span residues 4–52 (PDLG…KKDV) and 94–142 (KVFT…SSVS). 16 residues coordinate Zn(2+): Cys-10, Cys-15, Cys-25, Cys-28, Cys-33, His-36, His-42, Cys-44, Cys-100, Cys-105, Cys-115, Cys-118, Cys-123, His-126, His-132, and Cys-134. Positions 135 to 171 (QAGSSSVSRGRSSASRAAEQKPSGVSWLAQRLRRTVK) are disordered. The span at 136 to 151 (AGSSSVSRGRSSASRA) shows a compositional bias: low complexity.

Its subcellular location is the cytoplasm. It localises to the nucleus. In Rattus norvegicus (Rat), this protein is AN1-type zinc finger protein 2A (Zfand2a).